Consider the following 223-residue polypeptide: Flagellar L-ring protein (223 aa).

Residues 1–18 (MKKSLMALIVVGSFLLSA) form the signal peptide. The N-palmitoyl cysteine moiety is linked to residue Cys19. Cys19 carries S-diacylglycerol cysteine lipidation.

It belongs to the FlgH family. As to quaternary structure, the basal body constitutes a major portion of the flagellar organelle and consists of four rings (L,P,S, and M) mounted on a central rod.

The protein localises to the cell outer membrane. The protein resides in the bacterial flagellum basal body. Functionally, assembles around the rod to form the L-ring and probably protects the motor/basal body from shearing forces during rotation. The chain is Flagellar L-ring protein from Herminiimonas arsenicoxydans.